A 257-amino-acid polypeptide reads, in one-letter code: Imidazole glycerol phosphate synthase subunit HisF (257 aa).

Active-site residues include D12 and D131.

Belongs to the HisA/HisF family. In terms of assembly, heterodimer of HisH and HisF.

The protein resides in the cytoplasm. The catalysed reaction is 5-[(5-phospho-1-deoxy-D-ribulos-1-ylimino)methylamino]-1-(5-phospho-beta-D-ribosyl)imidazole-4-carboxamide + L-glutamine = D-erythro-1-(imidazol-4-yl)glycerol 3-phosphate + 5-amino-1-(5-phospho-beta-D-ribosyl)imidazole-4-carboxamide + L-glutamate + H(+). The protein operates within amino-acid biosynthesis; L-histidine biosynthesis; L-histidine from 5-phospho-alpha-D-ribose 1-diphosphate: step 5/9. In terms of biological role, IGPS catalyzes the conversion of PRFAR and glutamine to IGP, AICAR and glutamate. The HisF subunit catalyzes the cyclization activity that produces IGP and AICAR from PRFAR using the ammonia provided by the HisH subunit. The sequence is that of Imidazole glycerol phosphate synthase subunit HisF from Burkholderia orbicola (strain MC0-3).